The sequence spans 364 residues: 3-isopropylmalate dehydrogenase (364 aa).

76–89 (GPKWEKLPPNEQPE) serves as a coordination point for NAD(+). Arg-97, Arg-107, Arg-136, and Asp-225 together coordinate substrate. Residues Asp-225, Asp-249, and Asp-253 each contribute to the Mg(2+) site. 283–295 (GSAPDIAGKGIAN) is an NAD(+) binding site.

The protein belongs to the isocitrate and isopropylmalate dehydrogenases family. LeuB type 1 subfamily. Homodimer. Mg(2+) is required as a cofactor. Mn(2+) serves as cofactor.

The protein localises to the cytoplasm. It carries out the reaction (2R,3S)-3-isopropylmalate + NAD(+) = 4-methyl-2-oxopentanoate + CO2 + NADH. Its pathway is amino-acid biosynthesis; L-leucine biosynthesis; L-leucine from 3-methyl-2-oxobutanoate: step 3/4. Functionally, catalyzes the oxidation of 3-carboxy-2-hydroxy-4-methylpentanoate (3-isopropylmalate) to 3-carboxy-4-methyl-2-oxopentanoate. The product decarboxylates to 4-methyl-2 oxopentanoate. The sequence is that of 3-isopropylmalate dehydrogenase from Shewanella oneidensis (strain ATCC 700550 / JCM 31522 / CIP 106686 / LMG 19005 / NCIMB 14063 / MR-1).